A 227-amino-acid polypeptide reads, in one-letter code: Ribose-5-phosphate isomerase A (227 aa).

Substrate is bound by residues 30-33, 86-89, and 99-102; these read TGST, DGAD, and KGMG. The active-site Proton acceptor is glutamate 108. Lysine 126 contacts substrate.

Belongs to the ribose 5-phosphate isomerase family. As to quaternary structure, homodimer.

The catalysed reaction is aldehydo-D-ribose 5-phosphate = D-ribulose 5-phosphate. The protein operates within carbohydrate degradation; pentose phosphate pathway; D-ribose 5-phosphate from D-ribulose 5-phosphate (non-oxidative stage): step 1/1. Its function is as follows. Catalyzes the reversible conversion of ribose-5-phosphate to ribulose 5-phosphate. This chain is Ribose-5-phosphate isomerase A, found in Thermus thermophilus (strain ATCC 27634 / DSM 579 / HB8).